Consider the following 361-residue polypeptide: Peptide chain release factor 1 (361 aa).

Gln-237 is modified (N5-methylglutamine).

This sequence belongs to the prokaryotic/mitochondrial release factor family. In terms of processing, methylated by PrmC. Methylation increases the termination efficiency of RF1.

Its subcellular location is the cytoplasm. Functionally, peptide chain release factor 1 directs the termination of translation in response to the peptide chain termination codons UAG and UAA. The sequence is that of Peptide chain release factor 1 from Alcanivorax borkumensis (strain ATCC 700651 / DSM 11573 / NCIMB 13689 / SK2).